We begin with the raw amino-acid sequence, 315 residues long: Glycine--tRNA ligase alpha subunit (315 aa).

This sequence belongs to the class-II aminoacyl-tRNA synthetase family. As to quaternary structure, tetramer of two alpha and two beta subunits.

The protein resides in the cytoplasm. It catalyses the reaction tRNA(Gly) + glycine + ATP = glycyl-tRNA(Gly) + AMP + diphosphate. The chain is Glycine--tRNA ligase alpha subunit from Pseudomonas paraeruginosa (strain DSM 24068 / PA7) (Pseudomonas aeruginosa (strain PA7)).